The sequence spans 111 residues: COX assembly mitochondrial protein (111 aa).

Residues 39–82 form the CHCH domain; it reads YKKCANFVQAMADCAKANGMKVFPTCDKQRDEMKSCLLFYQTDE. 2 short sequence motifs (cx9C motif) span residues 42 to 52 and 64 to 74; these read CANFVQAMADC and CDKQRDEMKSC. Disulfide bonds link C42/C74 and C52/C64.

This sequence belongs to the CMC family.

Its subcellular location is the mitochondrion inner membrane. Its function is as follows. Required for mitochondrial cytochrome c oxidase (COX) assembly and respiration. Binds copper. May be involved in copper trafficking and distribution to mitochondrial COX and SOD1. This chain is COX assembly mitochondrial protein (CMC1), found in Saccharomyces cerevisiae (strain RM11-1a) (Baker's yeast).